A 239-amino-acid polypeptide reads, in one-letter code: Uridylate kinase (239 aa).

Residue 10 to 13 (KFSG) participates in ATP binding. Positions 18–23 (GENGFG) are involved in allosteric activation by GTP. A UMP-binding site is contributed by Gly52. ATP-binding residues include Gly53 and Arg57. Residues Asp73 and 134 to 141 (TGNPYFTT) each bind UMP. ATP contacts are provided by Thr161, Tyr167, and Asp170.

The protein belongs to the UMP kinase family. As to quaternary structure, homohexamer.

The protein localises to the cytoplasm. It carries out the reaction UMP + ATP = UDP + ADP. The protein operates within pyrimidine metabolism; CTP biosynthesis via de novo pathway; UDP from UMP (UMPK route): step 1/1. Allosterically activated by GTP. Inhibited by UTP. Catalyzes the reversible phosphorylation of UMP to UDP. The protein is Uridylate kinase of Campylobacter jejuni subsp. doylei (strain ATCC BAA-1458 / RM4099 / 269.97).